The chain runs to 77 residues: Small ribosomal subunit protein uS17 (77 aa).

Belongs to the universal ribosomal protein uS17 family. Part of the 30S ribosomal subunit.

Its function is as follows. One of the primary rRNA binding proteins, it binds specifically to the 5'-end of 16S ribosomal RNA. The chain is Small ribosomal subunit protein uS17 from Rickettsia bellii (strain OSU 85-389).